Here is a 357-residue protein sequence, read N- to C-terminus: Holliday junction branch migration complex subunit RuvB (357 aa).

Over residues 1 to 15 the composition is skewed to low complexity; it reads MAIQSDSLSSLPDSP. A disordered region spans residues 1–30; sequence MAIQSDSLSSLPDSPRIVAPQPVSPNEESI. The segment at 13-195 is large ATPase domain (RuvB-L); the sequence is DSPRIVAPQP…FGIVSRLEFY (183 aa). ATP contacts are provided by residues L34, R35, G76, K79, T80, T81, 142–144, R185, Y195, and R232; that span reads EDF. A Mg(2+)-binding site is contributed by T80. The segment at 196–266 is small ATPAse domain (RuvB-S); sequence NTDELARIVT…AAGRALAMLD (71 aa). The interval 269 to 357 is head domain (RuvB-H); the sequence is PQGLDVMDRK…SGGTGELFSK (89 aa). Positions 305, 324, and 329 each coordinate DNA.

The protein belongs to the RuvB family. In terms of assembly, homohexamer. Forms an RuvA(8)-RuvB(12)-Holliday junction (HJ) complex. HJ DNA is sandwiched between 2 RuvA tetramers; dsDNA enters through RuvA and exits via RuvB. An RuvB hexamer assembles on each DNA strand where it exits the tetramer. Each RuvB hexamer is contacted by two RuvA subunits (via domain III) on 2 adjacent RuvB subunits; this complex drives branch migration. In the full resolvosome a probable DNA-RuvA(4)-RuvB(12)-RuvC(2) complex forms which resolves the HJ.

The protein localises to the cytoplasm. The catalysed reaction is ATP + H2O = ADP + phosphate + H(+). Functionally, the RuvA-RuvB-RuvC complex processes Holliday junction (HJ) DNA during genetic recombination and DNA repair, while the RuvA-RuvB complex plays an important role in the rescue of blocked DNA replication forks via replication fork reversal (RFR). RuvA specifically binds to HJ cruciform DNA, conferring on it an open structure. The RuvB hexamer acts as an ATP-dependent pump, pulling dsDNA into and through the RuvAB complex. RuvB forms 2 homohexamers on either side of HJ DNA bound by 1 or 2 RuvA tetramers; 4 subunits per hexamer contact DNA at a time. Coordinated motions by a converter formed by DNA-disengaged RuvB subunits stimulates ATP hydrolysis and nucleotide exchange. Immobilization of the converter enables RuvB to convert the ATP-contained energy into a lever motion, pulling 2 nucleotides of DNA out of the RuvA tetramer per ATP hydrolyzed, thus driving DNA branch migration. The RuvB motors rotate together with the DNA substrate, which together with the progressing nucleotide cycle form the mechanistic basis for DNA recombination by continuous HJ branch migration. Branch migration allows RuvC to scan DNA until it finds its consensus sequence, where it cleaves and resolves cruciform DNA. In Bordetella bronchiseptica (strain ATCC BAA-588 / NCTC 13252 / RB50) (Alcaligenes bronchisepticus), this protein is Holliday junction branch migration complex subunit RuvB.